The chain runs to 177 residues: Large ribosomal subunit protein uL6 (177 aa).

This sequence belongs to the universal ribosomal protein uL6 family. Part of the 50S ribosomal subunit.

This protein binds to the 23S rRNA, and is important in its secondary structure. It is located near the subunit interface in the base of the L7/L12 stalk, and near the tRNA binding site of the peptidyltransferase center. The sequence is that of Large ribosomal subunit protein uL6 from Yersinia enterocolitica serotype O:8 / biotype 1B (strain NCTC 13174 / 8081).